Consider the following 226-residue polypeptide: MYTLIIPAAGQGKRMGAGKNKLFLLIDEVPIIVHTLRAFEKDKACKSIIMAINEEERPYFEELMQKYQIEKHVQFIQGGAERQDSVYNALQYASGVEYVLVHDGARPFVTNKVIRDVLTAAEKYGASICAVPVKDTVKKVEQGVVVETVERSQLNAVQTPQGFSVSLLLEAHRSAKQSCFLGTDDASLVERVGKQVGVVEGSYYNIKVTTPEDLLIAESFLRVQKK.

This sequence belongs to the IspD/TarI cytidylyltransferase family. IspD subfamily.

It carries out the reaction 2-C-methyl-D-erythritol 4-phosphate + CTP + H(+) = 4-CDP-2-C-methyl-D-erythritol + diphosphate. The protein operates within isoprenoid biosynthesis; isopentenyl diphosphate biosynthesis via DXP pathway; isopentenyl diphosphate from 1-deoxy-D-xylulose 5-phosphate: step 2/6. Functionally, catalyzes the formation of 4-diphosphocytidyl-2-C-methyl-D-erythritol from CTP and 2-C-methyl-D-erythritol 4-phosphate (MEP). This chain is 2-C-methyl-D-erythritol 4-phosphate cytidylyltransferase, found in Bacillus cereus (strain ATCC 14579 / DSM 31 / CCUG 7414 / JCM 2152 / NBRC 15305 / NCIMB 9373 / NCTC 2599 / NRRL B-3711).